A 378-amino-acid chain; its full sequence is AimR transcriptional regulator (378 aa).

As to quaternary structure, homodimer. Interacts with the viral arbitrium peptide, this interaction changes the oligomeric state of AimR from an active dimer to an inactive monomer leading to lysogeny.

Functionally, transcriptional regulator which is part of the latency-replication switch system that decides at the onset of infection whether to replicate and lyse the host or to lysogenize (latency) and keep the host viable. Activates the transcription of the aimX locus. Transcriptional activation of aimX seems to lead to the productive viral replication (lytic cycle), aimX possibly acting as a regulatory non-coding RNA. This chain is AimR transcriptional regulator (aimR), found in Bacillus phage phi3T (Bacteriophage phi-3T).